The primary structure comprises 341 residues: Protein P3 (341 aa).

The interval 46–175 (RARQAANPVS…QTKNAPDANE (130 aa)) is disordered. The span at 97–116 (KSKRAVRREKRRTAAKKATN) shows a compositional bias: basic residues. Positions 142–152 (SYLSSLLSSPS) are enriched in low complexity.

It belongs to the nepovirus protein P3 family.

The polypeptide is Protein P3 (Vitis rupestris (Grape)).